The chain runs to 161 residues: Phosphopantetheine adenylyltransferase (161 aa).

Serine 11 serves as a coordination point for substrate. ATP is bound by residues 11 to 12 (SF) and histidine 19. Lysine 43, leucine 75, and arginine 89 together coordinate substrate. ATP-binding positions include 90 to 92 (GLR), glutamate 100, and 125 to 131 (YSYLSSS).

Belongs to the bacterial CoaD family. Homohexamer. Mg(2+) serves as cofactor.

The protein resides in the cytoplasm. The catalysed reaction is (R)-4'-phosphopantetheine + ATP + H(+) = 3'-dephospho-CoA + diphosphate. Its pathway is cofactor biosynthesis; coenzyme A biosynthesis; CoA from (R)-pantothenate: step 4/5. In terms of biological role, reversibly transfers an adenylyl group from ATP to 4'-phosphopantetheine, yielding dephospho-CoA (dPCoA) and pyrophosphate. This Citrifermentans bemidjiense (strain ATCC BAA-1014 / DSM 16622 / JCM 12645 / Bem) (Geobacter bemidjiensis) protein is Phosphopantetheine adenylyltransferase.